A 448-amino-acid polypeptide reads, in one-letter code: Noelin-2 (448 aa).

The first 14 residues, 1 to 14, serve as a signal peptide directing secretion; that stretch reads MRKLRQTGTTIAGG. Coiled-coil stretches lie at residues 52–79 and 130–187; these read RDGR…LELR and LEQY…AQKL. N-linked (GlcNAc...) asparagine glycans are attached at residues N68, N149, N269, N304, N393, and N435. Residues 188-440 form the Olfactomedin-like domain; that stretch reads GCGKLTGVSN…QVLYNVTLFH (253 aa). C189 and C371 form a disulfide bridge.

In terms of assembly, peripherally associated with AMPAR complex. AMPAR complex consists of an inner core made of 4 pore-forming GluA/GRIA proteins (GRIA1, GRIA2, GRIA3 and GRIA4) and 4 major auxiliary subunits arranged in a twofold symmetry. One of the two pairs of distinct binding sites is occupied either by CNIH2, CNIH3 or CACNG2, CACNG3. The other harbors CACNG2, CACNG3, CACNG4, CACNG8 or GSG1L. This inner core of AMPAR complex is complemented by outer core constituents binding directly to the GluA/GRIA proteins at sites distinct from the interaction sites of the inner core constituents. Outer core constituents include at least PRRT1, PRRT2, CKAMP44/SHISA9, FRRS1L and NRN1. The proteins of the inner and outer core serve as a platform for other, more peripherally associated AMPAR constituents, including OLFM2. Alone or in combination, these auxiliary subunits control the gating and pharmacology of the AMPAR complex and profoundly impact their biogenesis and protein processing. Interacts with GRIA2. Interacts with OLFM1 and OLFM3. Interacts with SRF; the interaction promotes dissociation of SRF from the transcriptional repressor HEY2. Interacts with RUNX2. Expressed in the brain (at protein level). In the developing eye, first detected at 12 dpc in the retinal pigmented epithelium and preferentially expressed in differentiating retinal ganglion cells between 15 and 18 dpc. In the brain, expression is detected mainly in the olfactory bulb, cortex, piriform cortex, olfactory trabeculae, and inferior and superior colliculus. In the adult eye, expression is detected mainly in retinal ganglion cells. Expressed in carotid arteries.

The protein localises to the secreted. It is found in the synapse. The protein resides in the membrane. It localises to the nucleus. Its subcellular location is the cytoplasm. Its function is as follows. Involved in transforming growth factor beta (TGF-beta)-induced smooth muscle differentiation. TGF-beta induces expression and nuclear translocation of OLFM2 where it binds to SRF, causing its dissociation from the transcriptional repressor HEY2/HERP1 and facilitating binding of SRF to target genes. Plays a role in AMPAR complex organization. Is a regulator of vascular smooth-muscle cell (SMC) phenotypic switching, that acts by promoting RUNX2 and inhibiting MYOCD binding to SRF. SMC phenotypic switching is the process through which vascular SMCs undergo transition between a quiescent contractile phenotype and a proliferative synthetic phenotype in response to pathological stimuli. SMC phenotypic plasticity is essential for vascular development and remodeling. In Mus musculus (Mouse), this protein is Noelin-2 (Olfm2).